The chain runs to 525 residues: Peptide chain release factor 3 (525 aa).

The 269-residue stretch at 8-276 (AMRRTFAIIS…AFVKEAPPPQ (269 aa)) folds into the tr-type G domain. Residues 17–24 (SHPDAGKT), 85–89 (DTPGH), and 139–142 (NKMD) contribute to the GTP site.

It belongs to the TRAFAC class translation factor GTPase superfamily. Classic translation factor GTPase family. PrfC subfamily.

It is found in the cytoplasm. Functionally, increases the formation of ribosomal termination complexes and stimulates activities of RF-1 and RF-2. It binds guanine nucleotides and has strong preference for UGA stop codons. It may interact directly with the ribosome. The stimulation of RF-1 and RF-2 is significantly reduced by GTP and GDP, but not by GMP. In Coxiella burnetii (strain CbuK_Q154) (Coxiella burnetii (strain Q154)), this protein is Peptide chain release factor 3.